A 1113-amino-acid polypeptide reads, in one-letter code: StAR-related lipid transfer protein 13 (1113 aa).

An N-acetylmethionine modification is found at Met-1. One can recognise an SAM domain in the interval 55 to 122 (QQEIEAKEAC…LNKCASMRLD (68 aa)). 3 disordered regions span residues 164-218 (PVAD…HSAD), 230-256 (SSLP…RTRA), and 308-343 (NGDL…STVS). Residues 179–188 (NTASSESVLT) show a composition bias toward polar residues. Over residues 197-214 (SIHSESSGGSDSRSQSGH) the composition is skewed to low complexity. Polar residues predominate over residues 230-245 (SSLPQSTREGLNQSFH). Residues 322–340 (GLPCSSKSSGESSPLENSS) show a composition bias toward low complexity. Phosphoserine is present on Ser-411. Composition is skewed to polar residues over residues 421 to 435 (SNGV…SLGR) and 529 to 549 (PNQV…TTPS). 2 disordered regions span residues 421–443 (SNGV…GMRE) and 514–578 (HSTL…GASL). A Rho-GAP domain is found at 663–868 (VPLIVHVQRT…HMITECNRLF (206 aa)). The START domain maps to 899–1109 (LAESGATFHT…SFQPLVAEGP (211 aa)).

As to quaternary structure, homodimer. Interacts with TAX1BP1.

The protein resides in the cytoplasm. The protein localises to the membrane. Its subcellular location is the mitochondrion membrane. It localises to the lipid droplet. Its function is as follows. May function as a GTPase-activating protein. The polypeptide is StAR-related lipid transfer protein 13 (Stard13) (Mus musculus (Mouse)).